Here is a 119-residue protein sequence, read N- to C-terminus: Holo-[acyl-carrier-protein] synthase (119 aa).

The Mg(2+) site is built by Asp5 and Glu51.

The protein belongs to the P-Pant transferase superfamily. AcpS family. Mg(2+) is required as a cofactor.

The protein resides in the cytoplasm. The catalysed reaction is apo-[ACP] + CoA = holo-[ACP] + adenosine 3',5'-bisphosphate + H(+). Functionally, transfers the 4'-phosphopantetheine moiety from coenzyme A to a Ser of acyl-carrier-protein. The chain is Holo-[acyl-carrier-protein] synthase from Helicobacter pylori (strain HPAG1).